A 209-amino-acid polypeptide reads, in one-letter code: MEIEKLLEQVNWEKNNGIVPVIVQDEKGEVLTLAYMNKEALRKTLETGIAHYYSRSKGRIRMKGEVSGNIQTVKEIKIDCDNDALLLIVSPKGPACHTGNYSCFYRKLGEPERVLPIDYSLSILKELEEIIKRRKETPVEGSYTSKLFKEGREKIYKKFGEEAIEVLVAEKRERIIYEVADLLYHLLVLLTYNDISLGEVMNELRRRRK.

Residues 1–123 (MEIEKLLEQV…VLPIDYSLSI (123 aa)) are phosphoribosyl-AMP cyclohydrolase. A phosphoribosyl-ATP pyrophosphohydrolase region spans residues 124 to 209 (LKELEEIIKR…VMNELRRRRK (86 aa)).

This sequence in the N-terminal section; belongs to the PRA-CH family. It in the C-terminal section; belongs to the PRA-PH family.

It is found in the cytoplasm. It carries out the reaction 1-(5-phospho-beta-D-ribosyl)-ATP + H2O = 1-(5-phospho-beta-D-ribosyl)-5'-AMP + diphosphate + H(+). The enzyme catalyses 1-(5-phospho-beta-D-ribosyl)-5'-AMP + H2O = 1-(5-phospho-beta-D-ribosyl)-5-[(5-phospho-beta-D-ribosylamino)methylideneamino]imidazole-4-carboxamide. The protein operates within amino-acid biosynthesis; L-histidine biosynthesis; L-histidine from 5-phospho-alpha-D-ribose 1-diphosphate: step 2/9. It functions in the pathway amino-acid biosynthesis; L-histidine biosynthesis; L-histidine from 5-phospho-alpha-D-ribose 1-diphosphate: step 3/9. This chain is Histidine biosynthesis bifunctional protein HisIE (hisI), found in Pyrococcus furiosus (strain ATCC 43587 / DSM 3638 / JCM 8422 / Vc1).